A 172-amino-acid polypeptide reads, in one-letter code: Peptidyl-prolyl cis-trans isomerase (172 aa).

One can recognise a PPIase cyclophilin-type domain in the interval Y10–V168.

The protein belongs to the cyclophilin-type PPIase family.

The protein localises to the cytoplasm. It carries out the reaction [protein]-peptidylproline (omega=180) = [protein]-peptidylproline (omega=0). Functionally, PPIases accelerate the folding of proteins. They catalyze the cis-trans isomerization of proline imidic peptide bonds in oligopeptides. This Encephalitozoon cuniculi (strain GB-M1) (Microsporidian parasite) protein is Peptidyl-prolyl cis-trans isomerase (CPR1).